The sequence spans 346 residues: MADDRKAALDAALKKIEKNYGKGSIMKLGEKIDQQVSTIPSGSLALDVALGVGGYPRGRIIEVYGPESSGKTTVALHAIAEVQKNGGTAAFIDAEHALDPQYAQKLGVNIDELLLSQPDTGEQGLEIADALVSSGAVDIVVVDSVAALVPRAEIDGEMGDSHVGLQARLMSQALRKLSGSINKTKTIAIFINQIREKVGVMFGNPEITPGGRALKFYATIRLEVRRAEQLKQGTDIVGNRTKIKVVKNKVAPPFKIAEVDVMYGQGISQEGELLDMAVEKDIVDKSGAWYSYKEDRIGQGRENAKNYMSTHPEMMAEVSALVRAAYGIGEDVEIPEETQAELPLEE.

65–72 is a binding site for ATP; that stretch reads GPESSGKT.

Belongs to the RecA family.

The protein resides in the cytoplasm. Functionally, can catalyze the hydrolysis of ATP in the presence of single-stranded DNA, the ATP-dependent uptake of single-stranded DNA by duplex DNA, and the ATP-dependent hybridization of homologous single-stranded DNAs. It interacts with LexA causing its activation and leading to its autocatalytic cleavage. In Enterococcus hirae (strain ATCC 9790 / DSM 20160 / JCM 8729 / LMG 6399 / NBRC 3181 / NCIMB 6459 / NCDO 1258 / NCTC 12367 / WDCM 00089 / R), this protein is Protein RecA.